Reading from the N-terminus, the 319-residue chain is tRNA-cytidine(32) 2-sulfurtransferase (319 aa).

The PP-loop motif motif lies at 43 to 48 (SGGKDS). [4Fe-4S] cluster contacts are provided by cysteine 118, cysteine 121, and cysteine 209.

This sequence belongs to the TtcA family. As to quaternary structure, homodimer. It depends on Mg(2+) as a cofactor. [4Fe-4S] cluster serves as cofactor.

It is found in the cytoplasm. The catalysed reaction is cytidine(32) in tRNA + S-sulfanyl-L-cysteinyl-[cysteine desulfurase] + AH2 + ATP = 2-thiocytidine(32) in tRNA + L-cysteinyl-[cysteine desulfurase] + A + AMP + diphosphate + H(+). It functions in the pathway tRNA modification. Catalyzes the ATP-dependent 2-thiolation of cytidine in position 32 of tRNA, to form 2-thiocytidine (s(2)C32). The sulfur atoms are provided by the cysteine/cysteine desulfurase (IscS) system. The polypeptide is tRNA-cytidine(32) 2-sulfurtransferase (Neisseria gonorrhoeae (strain NCCP11945)).